A 358-amino-acid polypeptide reads, in one-letter code: 4-diphosphocytidyl-2-C-methyl-D-erythritol kinase (358 aa).

Residue Lys24 is part of the active site. ATP is bound at residue 138–148; it reads PVAGGMAGGSA. Asp186 is an active-site residue.

This sequence belongs to the GHMP kinase family. IspE subfamily.

The enzyme catalyses 4-CDP-2-C-methyl-D-erythritol + ATP = 4-CDP-2-C-methyl-D-erythritol 2-phosphate + ADP + H(+). Its pathway is isoprenoid biosynthesis; isopentenyl diphosphate biosynthesis via DXP pathway; isopentenyl diphosphate from 1-deoxy-D-xylulose 5-phosphate: step 3/6. Its function is as follows. Catalyzes the phosphorylation of the position 2 hydroxy group of 4-diphosphocytidyl-2C-methyl-D-erythritol. The protein is 4-diphosphocytidyl-2-C-methyl-D-erythritol kinase of Corynebacterium jeikeium (strain K411).